We begin with the raw amino-acid sequence, 469 residues long: UDP-N-acetylmuramoylalanine--D-glutamate ligase (469 aa).

Position 121 to 127 (121 to 127) interacts with ATP; it reads GTNGKST.

This sequence belongs to the MurCDEF family.

The protein localises to the cytoplasm. It carries out the reaction UDP-N-acetyl-alpha-D-muramoyl-L-alanine + D-glutamate + ATP = UDP-N-acetyl-alpha-D-muramoyl-L-alanyl-D-glutamate + ADP + phosphate + H(+). The protein operates within cell wall biogenesis; peptidoglycan biosynthesis. Its function is as follows. Cell wall formation. Catalyzes the addition of glutamate to the nucleotide precursor UDP-N-acetylmuramoyl-L-alanine (UMA). The sequence is that of UDP-N-acetylmuramoylalanine--D-glutamate ligase from Agrobacterium fabrum (strain C58 / ATCC 33970) (Agrobacterium tumefaciens (strain C58)).